We begin with the raw amino-acid sequence, 430 residues long: MSFTTRSTFSTNYRSLGSVQAPSYGARPVSSAASVYAGAGGSGSRISVSRSTSFRGGMGSGGLATGIAGGLAGMGGIQNEKETMQSLNDRLASYLDRVRSLETENRRLESKIREHLEKKGPQVRDWSHYFKIIEDLRAQIFANTVDNARIVLQIDNARLAADDFRVKYETELAMRQSVENDIHGLRKVIDDTNITRLQLETEIEALKEELLFMKKNHEEEVKGLQAQIASSGLTVEVDAPKSQDLAKIMADIRAQYDELARKNREELDKYWSQQIEESTTVVTTQSAEVGAAETTLTELRRTVQSLEIDLDSMRNLKASLENSLREVEARYALQMEQLNGILLHLESELAQTRAEGQRQAQEYEALLNIKVKLEAEIATYRRLLEDGEDFNLGDALDSSNSMQTIQKTTTRRIVDGKVVSETNDTKVLRH.

S2 is subject to N-acetylserine. The head stretch occupies residues 2-79 (SFTTRSTFST…GLAGMGGIQN (78 aa)). 4 positions are modified to phosphoserine: S7, S10, S15, and S18. S30 and S31 each carry phosphoserine; alternate. Residues S30 and S31 are each glycosylated (O-linked (GlcNAc) serine; alternate). The residue at position 34 (S34) is a Phosphoserine; by CDK1. Position 36 is a phosphotyrosine (Y36). S42 is subject to Phosphoserine. R45 is subject to Omega-N-methylarginine. Phosphoserine; alternate is present on S49. An O-linked (GlcNAc) serine; alternate glycan is attached at S49. S51 bears the Phosphoserine; by MAPKAPK2 and MAPKAPK3 mark. Phosphothreonine is present on T52. A Phosphoserine; by CAMK, PKC/PRKCE and AURKA modification is found at S53. Omega-N-methylarginine is present on R55. S60 is modified (phosphoserine). A Phosphothreonine modification is found at T65. Positions 70-373 (GLAGMGGIQN…EALLNIKVKL (304 aa)) are necessary for interaction with PNN. Residues 77–128 (IQNEKETMQSLNDRLASYLDRVRSLETENRRLESKIREHLEKKGPQVRDWSH) form an interaction with TRADD region. A coil 1A region spans residues 80–115 (EKETMQSLNDRLASYLDRVRSLETENRRLESKIREH). An IF rod domain is found at 80-391 (EKETMQSLND…RLLEDGEDFN (312 aa)). A Glycyl lysine isopeptide (Lys-Gly) (interchain with G-Cter in SUMO2) cross-link involves residue K81. S93 and S100 each carry phosphoserine. Residues 116 to 132 (LEKKGPQVRDWSHYFKI) are linker 1. K131 is modified (N6-acetyllysine). Residues 133–224 (IEDLRAQIFA…KNHEEEVKGL (92 aa)) are coil 1B. The residue at position 177 (S177) is a Phosphoserine. The tract at residues 225–248 (QAQIASSGLTVEVDAPKSQDLAKI) is linker 12. The tract at residues 243 to 391 (QDLAKIMADI…RLLEDGEDFN (149 aa)) is interaction with DNAJB6. Residue K247 forms a Glycyl lysine isopeptide (Lys-Gly) (interchain with G-Cter in SUMO2) linkage. Residues 249–387 (MADIRAQYDE…ATYRRLLEDG (139 aa)) form a coil 2 region. A Phosphothreonine modification is found at T302. Residues S305, S319, and S323 each carry the phosphoserine modification. Residues K370 and K372 each participate in a glycyl lysine isopeptide (Lys-Gly) (interchain with G-Cter in SUMO2) cross-link. The segment at 388–430 (EDFNLGDALDSSNSMQTIQKTTTRRIVDGKVVSETNDTKVLRH) is tail. Phosphoserine is present on residues S398, S399, and S401. T404 is subject to Phosphothreonine. K417 is covalently cross-linked (Glycyl lysine isopeptide (Lys-Gly) (interchain with G-Cter in SUMO2)). K426 is modified (N6-acetyllysine; alternate). K426 participates in a covalent cross-link: Glycyl lysine isopeptide (Lys-Gly) (interchain with G-Cter in SUMO1); alternate. Residue K426 forms a Glycyl lysine isopeptide (Lys-Gly) (interchain with G-Cter in SUMO2); alternate linkage.

It belongs to the intermediate filament family. Heterotetramer of two type I and two type II keratins. KRT18 associates with KRT8. Interacts with PLEC isoform 1C, when in a heterodimer with KRT8. Interacts with the thrombin-antithrombin complex. Interacts with PNN and mutated CFTR. Interacts with YWHAE, YWHAH and YWHAZ only when phosphorylated. Interacts with DNAJB6, TCHP and TRADD. Interacts with FAM83H. Interacts with EPPK1. Interacts with PKP1 and PKP2. As to quaternary structure, (Microbial infection) Interacts with hepatitis C virus/HCV core protein. In terms of processing, phosphorylation at Ser-34 increases during mitosis. Hyperphosphorylated at Ser-53 in diseased cirrhosis liver. Phosphorylation increases by IL-6. Post-translationally, proteolytically cleaved by caspases during epithelial cell apoptosis. Cleavage occurs at Asp-238 by either caspase-3, caspase-6 or caspase-7. O-GlcNAcylation increases solubility, and decreases stability by inducing proteasomal degradation. As to expression, expressed in colon, placenta, liver and very weakly in exocervix. Increased expression observed in lymph nodes of breast carcinoma.

Its subcellular location is the nucleus matrix. It localises to the cytoplasm. The protein localises to the perinuclear region. The protein resides in the nucleus. It is found in the nucleolus. Its function is as follows. Involved in the uptake of thrombin-antithrombin complexes by hepatic cells. When phosphorylated, plays a role in filament reorganization. Involved in the delivery of mutated CFTR to the plasma membrane. Together with KRT8, is involved in interleukin-6 (IL-6)-mediated barrier protection. The sequence is that of Keratin, type I cytoskeletal 18 (KRT18) from Homo sapiens (Human).